Here is a 321-residue protein sequence, read N- to C-terminus: Lipoyl synthase (321 aa).

[4Fe-4S] cluster is bound by residues Cys68, Cys73, Cys79, Cys94, Cys98, Cys101, and Ser308. In terms of domain architecture, Radical SAM core spans 80–297; that stretch reads FNHGTATFMI…KAEAMAMGFT (218 aa).

Belongs to the radical SAM superfamily. Lipoyl synthase family. [4Fe-4S] cluster is required as a cofactor.

It is found in the cytoplasm. It carries out the reaction [[Fe-S] cluster scaffold protein carrying a second [4Fe-4S](2+) cluster] + N(6)-octanoyl-L-lysyl-[protein] + 2 oxidized [2Fe-2S]-[ferredoxin] + 2 S-adenosyl-L-methionine + 4 H(+) = [[Fe-S] cluster scaffold protein] + N(6)-[(R)-dihydrolipoyl]-L-lysyl-[protein] + 4 Fe(3+) + 2 hydrogen sulfide + 2 5'-deoxyadenosine + 2 L-methionine + 2 reduced [2Fe-2S]-[ferredoxin]. It participates in protein modification; protein lipoylation via endogenous pathway; protein N(6)-(lipoyl)lysine from octanoyl-[acyl-carrier-protein]: step 2/2. Its function is as follows. Catalyzes the radical-mediated insertion of two sulfur atoms into the C-6 and C-8 positions of the octanoyl moiety bound to the lipoyl domains of lipoate-dependent enzymes, thereby converting the octanoylated domains into lipoylated derivatives. The polypeptide is Lipoyl synthase (Pectobacterium atrosepticum (strain SCRI 1043 / ATCC BAA-672) (Erwinia carotovora subsp. atroseptica)).